The following is a 58-amino-acid chain: UPF0391 membrane protein Bxeno_A2959 (58 aa).

The next 2 helical transmembrane spans lie at 4–24 (WALF…TGVA) and 33–53 (FLFI…FVVT).

The protein belongs to the UPF0391 family.

It localises to the cell membrane. This chain is UPF0391 membrane protein Bxeno_A2959, found in Paraburkholderia xenovorans (strain LB400).